The sequence spans 233 residues: Sugar fermentation stimulation protein homolog (233 aa).

Belongs to the SfsA family.

The polypeptide is Sugar fermentation stimulation protein homolog (Pyrobaculum neutrophilum (strain DSM 2338 / JCM 9278 / NBRC 100436 / V24Sta) (Thermoproteus neutrophilus)).